The following is a 356-amino-acid chain: 5-formaminoimidazole-4-carboxamide-1-(beta)-D-ribofuranosyl 5'-monophosphate synthetase (356 aa).

Residues His-27 and Ser-94 each contribute to the 5-amino-1-(5-phospho-beta-D-ribosyl)imidazole-4-carboxamide site. One can recognise an ATP-grasp domain in the interval 116–333 (RCLAWESDRE…YSDLIEKGLS (218 aa)). Residues 145 to 196 (AELI…TRYY) and Glu-226 contribute to the ATP site. Residue Asn-255 coordinates 5-amino-1-(5-phospho-beta-D-ribosyl)imidazole-4-carboxamide. Mg(2+)-binding residues include Glu-293 and Glu-306.

The protein belongs to the phosphohexose mutase family. Requires Mg(2+) as cofactor. Mn(2+) is required as a cofactor.

It carries out the reaction 5-amino-1-(5-phospho-beta-D-ribosyl)imidazole-4-carboxamide + formate + ATP = 5-formamido-1-(5-phospho-D-ribosyl)imidazole-4-carboxamide + ADP + phosphate. Its pathway is purine metabolism; IMP biosynthesis via de novo pathway; 5-formamido-1-(5-phospho-D-ribosyl)imidazole-4-carboxamide from 5-amino-1-(5-phospho-D-ribosyl)imidazole-4-carboxamide (formate route): step 1/1. In terms of biological role, catalyzes the ATP- and formate-dependent formylation of 5-aminoimidazole-4-carboxamide-1-beta-d-ribofuranosyl 5'-monophosphate (AICAR) to 5-formaminoimidazole-4-carboxamide-1-beta-d-ribofuranosyl 5'-monophosphate (FAICAR) in the absence of folates. The sequence is that of 5-formaminoimidazole-4-carboxamide-1-(beta)-D-ribofuranosyl 5'-monophosphate synthetase from Methanothrix thermoacetophila (strain DSM 6194 / JCM 14653 / NBRC 101360 / PT) (Methanosaeta thermophila).